The primary structure comprises 150 residues: Macrodomain Ter protein (150 aa).

It belongs to the MatP family. Homodimer.

The protein resides in the cytoplasm. In terms of biological role, required for spatial organization of the terminus region of the chromosome (Ter macrodomain) during the cell cycle. Prevents early segregation of duplicated Ter macrodomains during cell division. Binds specifically to matS, which is a 13 bp signature motif repeated within the Ter macrodomain. The sequence is that of Macrodomain Ter protein from Shigella dysenteriae serotype 1 (strain Sd197).